Here is a 98-residue protein sequence, read N- to C-terminus: Cystatin-A (98 aa).

At methionine 1 the chain carries N-acetylmethionine. Positions 46–50 match the Secondary area of contact motif; sequence QVVAG.

Belongs to the cystatin family. As to expression, expressed in the skin throughout the epidermis.

The protein resides in the cytoplasm. Functionally, this is an intracellular thiol proteinase inhibitor. Has an important role in desmosome-mediated cell-cell adhesion in the lower levels of the epidermis. The protein is Cystatin-A (CSTA) of Homo sapiens (Human).